The following is a 258-amino-acid chain: MSKVLQCCQLSKSYIQGDIETKVLNDLELSVDKGELLAVVGSSGCGKSTFLHLAGALDSPSSGKVLINNIDIHQLSDKERAKFRNEHIGFIYQFHHLMMEFNAQENVAMPLMIRGEKPKDALLAAKEMLDQVGLSHRIDYRPSQLSGGERQRVAIARALVTKPSLVLADEPTGNLDSDTAEQIYQLIRSLNKTAQTSFVIVTHDLVLANRMDRQVKLVQGQLRPLSDNSEQALPPTSSITDPANNIKDNEPQANERHV.

Residues 5–244 (LQCCQLSKSY…PTSSITDPAN (240 aa)) form the ABC transporter domain. 41 to 48 (GSSGCGKS) contributes to the ATP binding site. Residues 222–258 (LRPLSDNSEQALPPTSSITDPANNIKDNEPQANERHV) are disordered. A compositionally biased stretch (polar residues) spans 226–243 (SDNSEQALPPTSSITDPA). A compositionally biased stretch (basic and acidic residues) spans 247–258 (KDNEPQANERHV).

It belongs to the ABC transporter superfamily. Lipoprotein translocase (TC 3.A.1.125) family. As to quaternary structure, the complex is composed of two ATP-binding proteins (LolD) and two transmembrane proteins (LolC and LolE).

The protein localises to the cell inner membrane. Functionally, part of the ABC transporter complex LolCDE involved in the translocation of mature outer membrane-directed lipoproteins, from the inner membrane to the periplasmic chaperone, LolA. Responsible for the formation of the LolA-lipoprotein complex in an ATP-dependent manner. This is Lipoprotein-releasing system ATP-binding protein LolD from Colwellia psychrerythraea (strain 34H / ATCC BAA-681) (Vibrio psychroerythus).